Here is a 388-residue protein sequence, read N- to C-terminus: MDKTFFSSNEGKPITCKAAICRKAGEALVIEDIHVDPPQAYEVRIKILCTSLCHTDLTFWKLSFGPISRFPRILGHEAVGVVESIGENVDGFKQGDVVLPVFHPYCEECKDCKSSKTNWCDRYAEDFISNTRRYGMASRFKDSSGEVIHHFLFVSSFSEYTVVDIAHLVKISPEIPVDKAALLSCGVSTGIGAAWKVANVEEGSTIAIFGLGAVGLAVAEGARLRGAAKIIGIDTNSDKFELGKKFGFTDFINPTLCGEKKISEVIKEMTEGGVDYSFECVGLASLLNEAFISTRTGTGKTVMLGMEKHAAPISLGSFDLLRGRVICGSLFGGLKSKLDIPILVDHYLKKELNLDSFITHELNFKEINKAFALLEEGKSLRCILWMDK.

Residues Cys53, Thr55, His76, Cys106, Cys109, Cys112, Cys120, and Cys185 each contribute to the Zn(2+) site. Residues Thr55 and His76 each contribute to the an alcohol site. Position 55 (Thr55) interacts with NAD(+). NAD(+) is bound by residues Gly210–Gly215, Asp234, Lys239, Leu304–Met306, Phe331, and Arg381.

Belongs to the zinc-containing alcohol dehydrogenase family. Class-III subfamily. Homodimer. Zn(2+) serves as cofactor.

The protein localises to the cytoplasm. The enzyme catalyses a primary alcohol + NAD(+) = an aldehyde + NADH + H(+). It catalyses the reaction a secondary alcohol + NAD(+) = a ketone + NADH + H(+). This chain is Alcohol dehydrogenase-like 1, found in Arabidopsis thaliana (Mouse-ear cress).